The chain runs to 491 residues: Probable malate:quinone oxidoreductase (491 aa).

Belongs to the MQO family. FAD serves as cofactor.

The catalysed reaction is (S)-malate + a quinone = a quinol + oxaloacetate. It functions in the pathway carbohydrate metabolism; tricarboxylic acid cycle; oxaloacetate from (S)-malate (quinone route): step 1/1. This chain is Probable malate:quinone oxidoreductase, found in Leifsonia xyli subsp. xyli (strain CTCB07).